The primary structure comprises 467 residues: Uronate isomerase (467 aa).

It belongs to the metallo-dependent hydrolases superfamily. Uronate isomerase family.

It catalyses the reaction D-glucuronate = D-fructuronate. The catalysed reaction is aldehydo-D-galacturonate = keto-D-tagaturonate. It participates in carbohydrate metabolism; pentose and glucuronate interconversion. The protein is Uronate isomerase of Haemophilus influenzae (strain 86-028NP).